The sequence spans 190 residues: Protein LIGHT-DEPENDENT SHORT HYPOCOTYLS 1 (190 aa).

Residues 1-26 (MDLISHQPNKNPNSSTQLTPPSSSRY) are compositionally biased toward polar residues. 2 disordered regions span residues 1 to 28 (MDLISHQPNKNPNSSTQLTPPSSSRYEN) and 145 to 190 (GVSY…GATV). The ALOG domain occupies 25-152 (RYENQKRRDW…ARGVSYEKKR (128 aa)). Positions 150-154 (KKRKR) match the Nuclear localization signal motif. The segment covering 158 to 179 (QKPQTQPPLQLQQQQQQPQQGQ) has biased composition (low complexity). Polar residues predominate over residues 180-190 (SMMANYSGATV).

Belongs to the plant homeotic and developmental regulators ALOG protein family. Expressed in hypocotyls, shoot apices and lateral root primordia and, weakly, in vascular tissues.

The protein localises to the nucleus. In terms of biological role, probable transcription regulator that acts as a developmental regulator by promoting cell growth in response to continuous red (cR), far-red (cFR) and blue (cB) light in a phytochrome-dependent manner, at least during seedling development. The chain is Protein LIGHT-DEPENDENT SHORT HYPOCOTYLS 1 (LSH1) from Arabidopsis thaliana (Mouse-ear cress).